Consider the following 242-residue polypeptide: Phosphatidylethanolamine-binding protein 4 (242 aa).

The N-terminal stretch at 1–26 (MTMKLVAAALCLSLLAAGLWVGLSLT) is a signal peptide. A disordered region spans residues 31–50 (EEGKPGGEKPGGGKPGGSGR). Residues 38-50 (EKPGGGKPGGSGR) show a composition bias toward gly residues. N-linked (GlcNAc...) asparagine glycans are attached at residues asparagine 77 and asparagine 139. The important for secretion stretch occupies residues 210-242 (DPDTSTQFMTQFDEELSSEFGRINDDQEQFNQK).

The protein belongs to the phosphatidylethanolamine-binding protein family.

It localises to the secreted. In terms of biological role, promotes AKT phosphorylation, suggesting a possible role in the PI3K-AKT signaling pathway. The sequence is that of Phosphatidylethanolamine-binding protein 4 (Pebp4) from Mus musculus (Mouse).